The following is a 383-amino-acid chain: MAKHLFTSESVSEGHPDKIADQISDAVLDAILEQDPKARVACETYVKTGMVLVGGEITTSAWVDIEEITRRTVRDIGYVNSEMGFDANSCAVLSAIGKQSPDINQGVDRRDPLEQGAGDQGLMFGYATNETDVLMPAPVTYAHRLVQRQSEVRKSGSLPWLRPDAKSQVTFLYDDGKIAGIDAVVLSTQHSEEISQKDLHEAVMEEIIKPVLPAEWLSANTKYFINPTGRFVIGGPMGDCGLTGRKIIVDTYGGAARHGGGAFSGKDPSKVDRSAAYAARYVAKNIVAAGLADRCEIQVSYAIGVAEPTSIMIETFGTEKVSTEQLTLLVREFFDLRPYGLIQMLDLLHPIYQETAAYGHFGREHFPWEKTDKAAQLREAAGL.

Position 15 (His-15) interacts with ATP. Residue Asp-17 coordinates Mg(2+). A K(+)-binding site is contributed by Glu-43. 2 residues coordinate L-methionine: Glu-56 and Gln-99. The segment at 99 to 109 (QSPDINQGVDR) is flexible loop. Residues 164–166 (DAK), 230–231 (RF), Asp-239, 245–246 (RK), Ala-262, and Lys-266 contribute to the ATP site. Asp-239 lines the L-methionine pocket. Lys-270 serves as a coordination point for L-methionine.

The protein belongs to the AdoMet synthase family. In terms of assembly, homotetramer; dimer of dimers. It depends on Mg(2+) as a cofactor. K(+) is required as a cofactor.

Its subcellular location is the cytoplasm. It carries out the reaction L-methionine + ATP + H2O = S-adenosyl-L-methionine + phosphate + diphosphate. The protein operates within amino-acid biosynthesis; S-adenosyl-L-methionine biosynthesis; S-adenosyl-L-methionine from L-methionine: step 1/1. In terms of biological role, catalyzes the formation of S-adenosylmethionine (AdoMet) from methionine and ATP. The overall synthetic reaction is composed of two sequential steps, AdoMet formation and the subsequent tripolyphosphate hydrolysis which occurs prior to release of AdoMet from the enzyme. This chain is S-adenosylmethionine synthase, found in Pectobacterium carotovorum subsp. carotovorum (strain PC1).